Reading from the N-terminus, the 298-residue chain is Elongation factor Ts (298 aa).

The tract at residues 80–83 (TDFV) is involved in Mg(2+) ion dislocation from EF-Tu.

This sequence belongs to the EF-Ts family.

It localises to the cytoplasm. In terms of biological role, associates with the EF-Tu.GDP complex and induces the exchange of GDP to GTP. It remains bound to the aminoacyl-tRNA.EF-Tu.GTP complex up to the GTP hydrolysis stage on the ribosome. This is Elongation factor Ts from Paracidovorax citrulli (strain AAC00-1) (Acidovorax citrulli).